The primary structure comprises 479 residues: Ribosomal RNA small subunit methyltransferase F (479 aa).

Residues 125 to 131 (AAAPGSK), Glu149, Asp176, and Asp194 each bind S-adenosyl-L-methionine. The active-site Nucleophile is Cys247.

This sequence belongs to the class I-like SAM-binding methyltransferase superfamily. RsmB/NOP family.

The protein resides in the cytoplasm. It carries out the reaction cytidine(1407) in 16S rRNA + S-adenosyl-L-methionine = 5-methylcytidine(1407) in 16S rRNA + S-adenosyl-L-homocysteine + H(+). In terms of biological role, specifically methylates the cytosine at position 1407 (m5C1407) of 16S rRNA. This is Ribosomal RNA small subunit methyltransferase F from Salmonella schwarzengrund (strain CVM19633).